Consider the following 81-residue polypeptide: uncharacterized protein (81 aa).

The signal sequence occupies residues 1-31 (MRYNSFLSVLALFNVLLWFTFILAISMTFSA). The helical transmembrane segment at 52–74 (WFFVLLPYVIGLFFAIFDSATIG) threads the bilayer.

It is found in the membrane. This is an uncharacterized protein from Pasteurella multocida (strain Pm70).